The sequence spans 175 residues: Protein GrpE (175 aa).

The disordered stretch occupies residues 1 to 35 (MSEQKQEIENENAQNSENLQDDLQDNEKNETNELQ). Positions 25-35 (DNEKNETNELQ) are enriched in basic and acidic residues.

It belongs to the GrpE family. As to quaternary structure, homodimer.

Its subcellular location is the cytoplasm. Participates actively in the response to hyperosmotic and heat shock by preventing the aggregation of stress-denatured proteins, in association with DnaK and GrpE. It is the nucleotide exchange factor for DnaK and may function as a thermosensor. Unfolded proteins bind initially to DnaJ; upon interaction with the DnaJ-bound protein, DnaK hydrolyzes its bound ATP, resulting in the formation of a stable complex. GrpE releases ADP from DnaK; ATP binding to DnaK triggers the release of the substrate protein, thus completing the reaction cycle. Several rounds of ATP-dependent interactions between DnaJ, DnaK and GrpE are required for fully efficient folding. The polypeptide is Protein GrpE (Campylobacter jejuni (strain RM1221)).